The following is a 107-amino-acid chain: Integration host factor subunit beta (107 aa).

Positions 56-107 are disordered; that stretch reads RPARVGRNPKSGEKVQVPEKFVPHFKPGKELRERVDGRAGEPLKADDPDDER. Residues 82–101 show a composition bias toward basic and acidic residues; the sequence is PGKELRERVDGRAGEPLKAD.

Belongs to the bacterial histone-like protein family. Heterodimer of an alpha and a beta chain.

Functionally, this protein is one of the two subunits of integration host factor, a specific DNA-binding protein that functions in genetic recombination as well as in transcriptional and translational control. The chain is Integration host factor subunit beta from Burkholderia vietnamiensis (strain G4 / LMG 22486) (Burkholderia cepacia (strain R1808)).